The primary structure comprises 430 residues: Replication factor C large subunit (430 aa).

75 to 82 serves as a coordination point for ATP; that stretch reads GPPGTGKT.

Belongs to the activator 1 small subunits family. RfcL subfamily. In terms of assembly, heteromultimer composed of small subunits (RfcS) and large subunits (RfcL).

Functionally, part of the RFC clamp loader complex which loads the PCNA sliding clamp onto DNA. In Nanoarchaeum equitans (strain Kin4-M), this protein is Replication factor C large subunit.